The following is a 627-amino-acid chain: Monoterpene synthase like 1, chloroplastic (627 aa).

The transit peptide at Met1 to Ala50 directs the protein to the chloroplast. Positions 378, 382, and 530 each coordinate Mg(2+). Residues Asp378–Asp382 carry the DDXXD motif motif.

It belongs to the terpene synthase family. Tpsd subfamily. Mg(2+) is required as a cofactor. Mn(2+) serves as cofactor.

It localises to the plastid. It is found in the chloroplast. It participates in terpene metabolism; oleoresin biosynthesis. Its pathway is secondary metabolite biosynthesis; terpenoid biosynthesis. Monoterpene synthase (TPS) involved in the biosynthesis of monoterpene natural products included in conifer oleoresin secretions and volatile emissions; these compounds contribute to biotic and abiotic stress defense against herbivores and pathogens. This is Monoterpene synthase like 1, chloroplastic from Pinus contorta (Shore pine).